Consider the following 404-residue polypeptide: uncharacterized protein (404 aa).

The segment covering 262-278 has biased composition (polar residues); that stretch reads VSTGDTSPYGTEDSSPA. 2 disordered regions span residues 262–307 and 320–340; these read VSTG…SPSL and KKSH…GGAD. Phosphoserine is present on residues S268, S276, and S279. 2 positions are modified to phosphothreonine: T290 and T293. Residues S304, S306, S324, S358, and S362 each carry the phosphoserine modification. A compositionally biased stretch (basic and acidic residues) spans 320–336; sequence KKSHSANDSEEFFREDD.

This is an uncharacterized protein from Rattus norvegicus (Rat).